Reading from the N-terminus, the 476-residue chain is MAKEQVQAITKMEEDFAQWYTDIVKKAELVDYSSVKGCMILRPYGYALWENMQKVMDEKLKATGHENVYMPMFIPESLLQKEKDHVEGFAPEVAWVTHGGDEKLAERLCIRPTSETLFCEHFSKIVQSYNDLPKLYNQWCSVVRWEKTTRPFLRTTEFLWQEGHTIHETAEESQAETLNILNLYASFCEDYLAIPVIKGQKTEKEKFAGAKATYTIESLMHDGKALQTGTSHNFGTNFSEAFDIKFLDRTGKWQYVHQTSWGVSTRMIGGLIMVHGDNNGLVMPPKVAPVQVVIVPIAQHKEGVLAKAIELQGHIQKVARVKIDASNKTPGWKFNEYEMKGIPIRLEVGPKDIEKNQVVLVRRDTKEKEFISMDQLEERIPALLEEIHNSLFNKAKVFRDENTYSVTNFEEMKKIADEKQGFIKAMWCGELACEEKLKEEVGVSSRCMPFEQEHLADECVCCGKEAKQMVYWGKAY.

The protein belongs to the class-II aminoacyl-tRNA synthetase family. ProS type 3 subfamily. As to quaternary structure, homodimer.

The protein resides in the cytoplasm. It catalyses the reaction tRNA(Pro) + L-proline + ATP = L-prolyl-tRNA(Pro) + AMP + diphosphate. Its function is as follows. Catalyzes the attachment of proline to tRNA(Pro) in a two-step reaction: proline is first activated by ATP to form Pro-AMP and then transferred to the acceptor end of tRNA(Pro). The protein is Proline--tRNA ligase 2 of Bacillus cereus (strain ZK / E33L).